Reading from the N-terminus, the 481-residue chain is F-box/LRR-repeat protein At3g03360 (481 aa).

A disordered region spans residues 1–28 (MEKESQENSTRPDASSTVFSSSKSTCAS). Residues 14 to 28 (ASSTVFSSSKSTCAS) show a composition bias toward low complexity. Positions 36-84 (GDLISRLPDDILQLILSYLPTRLAIKTSVLSRRWRHVWSDTWSLSFHRD) constitute an F-box domain. LRR repeat units follow at residues 118–145 (SRPD…SLYL), 196–221 (HCNI…LLFF), 295–320 (EADF…TLGA), 350–375 (ISRY…TIHP), and 413–439 (RRNV…ELIV).

The chain is F-box/LRR-repeat protein At3g03360 from Arabidopsis thaliana (Mouse-ear cress).